Consider the following 364-residue polypeptide: Myeloid cell surface antigen CD33 (364 aa).

The first 17 residues, 1-17 (MPLLLLLPLLWAGALAM), serve as a signal peptide directing secretion. Residues 18–259 (DPNFWLQVQE…KQETRAGVVH (242 aa)) lie on the Extracellular side of the membrane. Residues 19-135 (PNFWLQVQES…KYSYKSPQLS (117 aa)) form the Ig-like V-type domain. Disulfide bonds link Cys36–Cys169, Cys41–Cys101, and Cys163–Cys212. Residues Asn100 and Asn113 are each glycosylated (N-linked (GlcNAc...) asparagine). Arg119 contributes to the N-acetylneuraminate binding site. The Ig-like C2-type domain occupies 145-228 (PKILIPGTLE…AGVTTERTIQ (84 aa)). Glu154 provides a ligand contact to D-galactose. Asn160, Asn209, and Asn230 each carry an N-linked (GlcNAc...) asparagine glycan. The helical transmembrane segment at 260 to 282 (GAIGGAGVTALLALCLCLIFFIV) threads the bilayer. Over 283–364 (KTHRRKAART…STEYSEVRTQ (82 aa)) the chain is Cytoplasmic. Residues 290–364 (ARTAVGRNDT…STEYSEVRTQ (75 aa)) are disordered. 2 short sequence motifs (ITIM motif) span residues 338 to 343 (LHYASL) and 356 to 361 (TEYSEV). Residues Tyr340 and Tyr358 each carry the phosphotyrosine; by LCK modification.

It belongs to the immunoglobulin superfamily. SIGLEC (sialic acid binding Ig-like lectin) family. As to quaternary structure, homodimer; disulfide-linked. Interacts with PTPN6/SHP-1 and PTPN11/SHP-2 upon phosphorylation. Interacts with C1QA (via C-terminus); this interaction activates CD33 inhibitory motifs. Post-translationally, glycosylated. Glycosylation at Asn-100 is critical for regulating ligand recognition. In terms of processing, phosphorylation of Tyr-340 is involved in binding to PTPN6 and PTPN11. Phosphorylation of Tyr-358 is involved in binding to PTPN6. LCK phosphorylates Tyr-340 efficiently and Tyr-358 to a lesser extent. Monocytic/myeloid lineage cells. In the brain, CD33 is mainly expressed on microglial cells.

It localises to the cell membrane. The protein resides in the peroxisome. Sialic-acid-binding immunoglobulin-like lectin (Siglec) that plays a role in mediating cell-cell interactions and in maintaining immune cells in a resting state. Preferentially recognizes and binds alpha-2,3- and more avidly alpha-2,6-linked sialic acid-bearing glycans. Upon engagement of ligands such as C1q or syalylated glycoproteins, two immunoreceptor tyrosine-based inhibitory motifs (ITIMs) located in CD33 cytoplasmic tail are phosphorylated by Src-like kinases such as LCK. These phosphorylations provide docking sites for the recruitment and activation of protein-tyrosine phosphatases PTPN6/SHP-1 and PTPN11/SHP-2. In turn, these phosphatases regulate downstream pathways through dephosphorylation of signaling molecules. One of the repressive effect of CD33 on monocyte activation requires phosphoinositide 3-kinase/PI3K. The polypeptide is Myeloid cell surface antigen CD33 (CD33) (Homo sapiens (Human)).